The primary structure comprises 654 residues: Insulin receptor substrate 1 (654 aa).

A PH domain is found at aspartate 3 to alanine 107. Tyrosine 36 is modified (phosphotyrosine). Positions phenylalanine 126–phenylalanine 230 constitute an IRS-type PTB domain. The interval glutamate 228–glutamate 329 is disordered. The segment covering lysine 235 to serine 245 has biased composition (polar residues). Serine 276 carries the post-translational modification Phosphoserine. Residues asparagine 307–tyrosine 321 show a composition bias toward polar residues. Tyrosine 345 is subject to Phosphotyrosine; by INSR. 6 short sequence motifs (YXXM motif) span residues tyrosine 345–methionine 348, tyrosine 384–methionine 387, tyrosine 398–methionine 401, tyrosine 411–methionine 414, tyrosine 430–methionine 433, and tyrosine 466–methionine 469. Phosphotyrosine; by INSR is present on residues tyrosine 398 and tyrosine 411. Residue tyrosine 430 is modified to Phosphotyrosine. 2 disordered regions span residues serine 473 to cysteine 494 and tyrosine 507 to glycine 532. Positions serine 514–aspartate 524 are enriched in low complexity. Tyrosine 563 bears the Phosphotyrosine; by INSR mark.

In terms of assembly, interacts with the NPXY motif of tyrosine-phosphorylated igf1r and insr via the PTB domain. Binds to phosphatidylinositol 3-kinase p85 subunit via the phosphorylated YXXM motifs.

Functionally, may mediate the control of various cellular processes by insulin. When phosphorylated by the insulin receptor binds specifically to various cellular proteins containing SH2 domains such as phosphatidylinositol 3-kinase p85 subunit or grb2. Activates phosphatidylinositol 3-kinase when bound to the regulatory p85 subunit. The sequence is that of Insulin receptor substrate 1 from Xenopus tropicalis (Western clawed frog).